The primary structure comprises 368 residues: L-lactate oxidase (368 aa).

The FMN hydroxy acid dehydrogenase domain maps to 13–368 (VNAIDVLDLA…KQMKVKTTFA (356 aa)). Tyr39 serves as a coordination point for pyruvate. FMN-binding positions include 92–94 (PIA), Ser121, and Gln143. Position 145 (Tyr145) interacts with pyruvate. Position 171 (Thr171) interacts with FMN. Arg180 is a binding site for pyruvate. Lys239 and Ser261 together coordinate FMN. Pyruvate is bound by residues His263 and Arg266. His263 acts as the Proton acceptor in catalysis. FMN-binding positions include 294–298 (DGGVQ) and Arg318.

The protein belongs to the FMN-dependent alpha-hydroxy acid dehydrogenase family. As to quaternary structure, homotetramer. FMN serves as cofactor.

It carries out the reaction (S)-lactate + O2 = pyruvate + H2O2. It catalyses the reaction 2-hydroxyoctanoate + O2 = 2-oxooctanoate + H2O2. Its function is as follows. Catalyzes the oxidation of (S)-lactate (L-lactate) to pyruvate, with a reduction of O2 to H2O2. To a lesser extent is also able to use 2-hydroxyoctanoate as substrate. May be involved in the utilization of L-lactate as an energy source for growth. This chain is L-lactate oxidase, found in Lacticaseibacillus rhamnosus (strain LMS2-1).